The following is a 248-amino-acid chain: PF03932 family protein CutC (248 aa).

This sequence belongs to the CutC family. As to quaternary structure, homodimer.

Its subcellular location is the cytoplasm. The sequence is that of PF03932 family protein CutC from Escherichia coli O157:H7.